Here is a 140-residue protein sequence, read N- to C-terminus: Large ribosomal subunit protein uL14 (140 aa).

This sequence belongs to the universal ribosomal protein uL14 family. In terms of assembly, component of the large ribosomal subunit.

It localises to the cytoplasm. Component of the large ribosomal subunit. The ribosome is a large ribonucleoprotein complex responsible for the synthesis of proteins in the cell. The sequence is that of Large ribosomal subunit protein uL14 (rpl23) from Ictalurus punctatus (Channel catfish).